A 456-amino-acid chain; its full sequence is MDIRTHLGINQELSGKPVKVAEGYAEVLLKTQESMKADDKGLVHGGFIFSAADYASMLAVNHPNVVLAGANVKFLKPVKVGDEIICKARVSEDKGKKKKVLVECFKGEDKVFEGEFFTVFLIDMFWRGEKMEVKPFYWKGDKLLLLDQRKLPHQEVWLELKTYEEVAKAIKEMAVRGAPAIGCTAAYGFVLGVKVQKEDPEKVYETLKNTRPTAYNLFWALDRMMKALKEGKDIEEEAKEIEKEDYEANKRMGEIGSEIVPLNAKVLTHCNTGALATAGWGTALGVIRSAHYGGKNIFVWVDETRPYLQGARLTAWELVKESIPHKIITDSTAGFLMKKGMVDLVIVGADRITAKGDVANKIGTYTLAVLCKEHNVPFYVAAPTSTIDSNIKSGEEIIIEERSPEEVKVCGGCAIAPKESDALHLAFDITPAELITGIITEKGIFKPERITEALKD.

The thioesterase stretch occupies residues 40–113; that stretch reads KGLVHGGFIF…CFKGEDKVFE (74 aa). The MTR-1-P isomerase stretch occupies residues 124–456; sequence MFWRGEKMEV…PERITEALKD (333 aa). Substrate is bound by residues 176 to 178, R211, and Q309; that span reads RGA. D350 acts as the Proton donor in catalysis. 360 to 361 is a substrate binding site; the sequence is NK.

This sequence belongs to the eIF-2B alpha/beta/delta subunits family. MtnA subfamily.

The enzyme catalyses 5-(methylsulfanyl)-alpha-D-ribose 1-phosphate = 5-(methylsulfanyl)-D-ribulose 1-phosphate. Its pathway is amino-acid biosynthesis; L-methionine biosynthesis via salvage pathway; L-methionine from S-methyl-5-thio-alpha-D-ribose 1-phosphate: step 1/6. In terms of biological role, catalyzes the interconversion of methylthioribose-1-phosphate (MTR-1-P) into methylthioribulose-1-phosphate (MTRu-1-P). The protein is Methylthioribose-1-phosphate isomerase (mtnA) of Aquifex aeolicus (strain VF5).